An 869-amino-acid chain; its full sequence is DNA mismatch repair protein MutS (869 aa).

ATP is bound at residue 624-631 (GPNMGGKS).

It belongs to the DNA mismatch repair MutS family.

Its function is as follows. This protein is involved in the repair of mismatches in DNA. It is possible that it carries out the mismatch recognition step. This protein has a weak ATPase activity. This Solibacter usitatus (strain Ellin6076) protein is DNA mismatch repair protein MutS.